Here is a 616-residue protein sequence, read N- to C-terminus: Sulfite reductase [NADPH] hemoprotein beta-component (616 aa).

Residues 1 to 10 (MDDHSPRDAA) are compositionally biased toward basic and acidic residues. The disordered stretch occupies residues 1–35 (MDDHSPRDAAETPAPGPAATPAKRVYETPPTSRPI). A compositionally biased stretch (low complexity) spans 11–22 (ETPAPGPAATPA). Residues Cys-470, Cys-476, Cys-515, and Cys-519 each coordinate [4Fe-4S] cluster. Cys-519 serves as a coordination point for siroheme.

Belongs to the nitrite and sulfite reductase 4Fe-4S domain family. As to quaternary structure, alpha(8)-beta(8). The alpha component is a flavoprotein, the beta component is a hemoprotein. The cofactor is siroheme. [4Fe-4S] cluster is required as a cofactor.

It catalyses the reaction hydrogen sulfide + 3 NADP(+) + 3 H2O = sulfite + 3 NADPH + 4 H(+). It functions in the pathway sulfur metabolism; hydrogen sulfide biosynthesis; hydrogen sulfide from sulfite (NADPH route): step 1/1. Component of the sulfite reductase complex that catalyzes the 6-electron reduction of sulfite to sulfide. This is one of several activities required for the biosynthesis of L-cysteine from sulfate. This is Sulfite reductase [NADPH] hemoprotein beta-component from Methylobacterium radiotolerans (strain ATCC 27329 / DSM 1819 / JCM 2831 / NBRC 15690 / NCIMB 10815 / 0-1).